The following is a 159-amino-acid chain: Transcription elongation factor GreA (159 aa).

Residues 44–75 (SENAEYDAAREQQSQTEARIADLESKLSSATI) are a coiled coil.

Belongs to the GreA/GreB family.

In terms of biological role, necessary for efficient RNA polymerase transcription elongation past template-encoded arresting sites. The arresting sites in DNA have the property of trapping a certain fraction of elongating RNA polymerases that pass through, resulting in locked ternary complexes. Cleavage of the nascent transcript by cleavage factors such as GreA or GreB allows the resumption of elongation from the new 3'terminus. GreA releases sequences of 2 to 3 nucleotides. The protein is Transcription elongation factor GreA of Chlorobium phaeovibrioides (strain DSM 265 / 1930) (Prosthecochloris vibrioformis (strain DSM 265)).